A 121-amino-acid polypeptide reads, in one-letter code: Large ribosomal subunit protein bL12 (121 aa).

It belongs to the bacterial ribosomal protein bL12 family. As to quaternary structure, homodimer. Part of the ribosomal stalk of the 50S ribosomal subunit. Forms a multimeric L10(L12)X complex, where L10 forms an elongated spine to which 2 to 4 L12 dimers bind in a sequential fashion. Binds GTP-bound translation factors.

Functionally, forms part of the ribosomal stalk which helps the ribosome interact with GTP-bound translation factors. Is thus essential for accurate translation. This Psychromonas ingrahamii (strain DSM 17664 / CCUG 51855 / 37) protein is Large ribosomal subunit protein bL12.